A 458-amino-acid polypeptide reads, in one-letter code: Phosphoglucosamine mutase (458 aa).

Ser-100 (phosphoserine intermediate) is an active-site residue. Mg(2+) is bound by residues Ser-100, Asp-254, Asp-256, and Asp-258. Residue Ser-100 is modified to Phosphoserine.

Belongs to the phosphohexose mutase family. Mg(2+) is required as a cofactor. Post-translationally, activated by phosphorylation.

It catalyses the reaction alpha-D-glucosamine 1-phosphate = D-glucosamine 6-phosphate. In terms of biological role, catalyzes the conversion of glucosamine-6-phosphate to glucosamine-1-phosphate. The chain is Phosphoglucosamine mutase from Nocardia farcinica (strain IFM 10152).